Consider the following 1345-residue polypeptide: Protein dispatched homolog 2 (1345 aa).

Residues 1–28 form a disordered region; it reads MAPEASPERSCSLHTCPLEDPTGAPVPP. The chain crosses the membrane as a helical span at residues 125–145; the sequence is VAVIVGCLAFIFLCTLAGLLG. 2 N-linked (GlcNAc...) asparagine glycosylation sites follow: Asn304 and Asn420. An SSD domain is found at 429–598; that stretch reads LGLKPRLLKY…LLWLPATVVL (170 aa). Helical transmembrane passes span 440–460, 465–485, 497–517, 544–564, 572–592, and 659–679; these read LAED…GMSL, LFIT…AYFL, FVNL…TLIF, FGYL…GSYL, CFAL…LLWL, and YIWI…GGVS. Asn776 carries an N-linked (GlcNAc...) asparagine glycan. The next 5 helical transmembrane spans lie at 919–939, 945–965, 974–994, 1019–1039, and 1043–1063; these read PAVV…LSTW, LFSV…LVLL, ALFL…YCIS, AMTT…TILL, and LGII…FFFQ. Disordered regions lie at residues 1251-1271 and 1295-1345; these read VRVP…GHPI and PNMP…GYSS. The span at 1297–1306 shows a compositional bias: polar residues; that stretch reads MPNSHHSSLS. At Arg1310 the chain carries Omega-N-methylarginine.

This sequence belongs to the dispatched family.

The protein localises to the membrane. In Mus musculus (Mouse), this protein is Protein dispatched homolog 2 (Disp2).